Consider the following 818-residue polypeptide: Probable helicase MAGATAMA 3 (818 aa).

One can recognise a UvrD-like helicase ATP-binding domain in the interval 259–559 (NKSQKEAIDV…KMLKTQYRMH (301 aa)). ATP is bound at residue 280–287 (GPPGTGKT). Acidic residues-rich tracts occupy residues 781-790 (PDAPLYEDES) and 798-818 (GDDD…AGED). The disordered stretch occupies residues 781-818 (PDAPLYEDESLPVAPYGGDDDFGDGDADQDDVAMAGED).

This sequence belongs to the helicase family. Expressed in flowers, siliques, leaves, roots and shoot apex.

The protein resides in the nucleus. In terms of biological role, probable helicase that may regulate RNA molecules involved in nucleolar organization and pollen tube guidance. This chain is Probable helicase MAGATAMA 3 (MAA3), found in Arabidopsis thaliana (Mouse-ear cress).